We begin with the raw amino-acid sequence, 969 residues long: Alanine--tRNA ligase (969 aa).

The transit peptide at methionine 1–arginine 8 directs the protein to the mitochondrion. 4 residues coordinate Zn(2+): histidine 616, histidine 620, cysteine 735, and histidine 739.

The protein belongs to the class-II aminoacyl-tRNA synthetase family. In terms of assembly, monomer. Zn(2+) serves as cofactor.

It localises to the mitochondrion. The protein resides in the cytoplasm. It carries out the reaction tRNA(Ala) + L-alanine + ATP = L-alanyl-tRNA(Ala) + AMP + diphosphate. Functionally, catalyzes the attachment of alanine to tRNA(Ala) in a two-step reaction: alanine is first activated by ATP to form Ala-AMP and then transferred to the acceptor end of tRNA(Ala). Also edits incorrectly charged tRNA(Ala) via its editing domain. The sequence is that of Alanine--tRNA ligase from Candida albicans (strain SC5314 / ATCC MYA-2876) (Yeast).